A 340-amino-acid chain; its full sequence is Ketol-acid reductoisomerase (NADP(+)) (340 aa).

The KARI N-terminal Rossmann domain maps to 1–183 (MAITVYYDKD…GGGRTGIIET (183 aa)). Residues 26-29 (FGSQ), Arg-49, Ser-52, Ser-54, and 84-87 (DEIQ) contribute to the NADP(+) site. His-109 is a catalytic residue. Gly-135 provides a ligand contact to NADP(+). The KARI C-terminal knotted domain maps to 184–329 (TFKAETETDL…RNLRAMMPWI (146 aa)). Asp-192, Glu-196, Glu-228, and Glu-232 together coordinate Mg(2+). Ser-253 lines the substrate pocket.

The protein belongs to the ketol-acid reductoisomerase family. Requires Mg(2+) as cofactor.

It carries out the reaction (2R)-2,3-dihydroxy-3-methylbutanoate + NADP(+) = (2S)-2-acetolactate + NADPH + H(+). The enzyme catalyses (2R,3R)-2,3-dihydroxy-3-methylpentanoate + NADP(+) = (S)-2-ethyl-2-hydroxy-3-oxobutanoate + NADPH + H(+). The protein operates within amino-acid biosynthesis; L-isoleucine biosynthesis; L-isoleucine from 2-oxobutanoate: step 2/4. Its pathway is amino-acid biosynthesis; L-valine biosynthesis; L-valine from pyruvate: step 2/4. Its function is as follows. Involved in the biosynthesis of branched-chain amino acids (BCAA). Catalyzes an alkyl-migration followed by a ketol-acid reduction of (S)-2-acetolactate (S2AL) to yield (R)-2,3-dihydroxy-isovalerate. In the isomerase reaction, S2AL is rearranged via a Mg-dependent methyl migration to produce 3-hydroxy-3-methyl-2-ketobutyrate (HMKB). In the reductase reaction, this 2-ketoacid undergoes a metal-dependent reduction by NADPH to yield (R)-2,3-dihydroxy-isovalerate. The polypeptide is Ketol-acid reductoisomerase (NADP(+)) (Campylobacter jejuni subsp. doylei (strain ATCC BAA-1458 / RM4099 / 269.97)).